The sequence spans 1393 residues: DNA-directed RNA polymerase subunit beta' (1393 aa).

The Zn(2+) site is built by C70, C72, C85, and C88. D461, D463, and D465 together coordinate Mg(2+). Zn(2+) is bound by residues C815, C889, C896, and C899.

Belongs to the RNA polymerase beta' chain family. The RNAP catalytic core consists of 2 alpha, 1 beta, 1 beta' and 1 omega subunit. When a sigma factor is associated with the core the holoenzyme is formed, which can initiate transcription. It depends on Mg(2+) as a cofactor. Zn(2+) serves as cofactor.

The enzyme catalyses RNA(n) + a ribonucleoside 5'-triphosphate = RNA(n+1) + diphosphate. Functionally, DNA-dependent RNA polymerase catalyzes the transcription of DNA into RNA using the four ribonucleoside triphosphates as substrates. This is DNA-directed RNA polymerase subunit beta' from Vesicomyosocius okutanii subsp. Calyptogena okutanii (strain HA).